We begin with the raw amino-acid sequence, 292 residues long: Poly(U)-specific endoribonuclease-A (292 aa).

One can recognise an EndoU domain in the interval 8–285 (LNHELSKLFN…IGTAYPVLLS (278 aa)). Residues His162, His178, and Lys224 contribute to the active site.

It belongs to the ENDOU family. Monomer. The cofactor is Mn(2+).

It localises to the nucleus. It catalyses the reaction uridylyl-uridylyl-ribonucleotide-RNA = a 3'-end uridylyl-2',3'-cyclophospho-uridine-RNA + a 5'-end dephospho-ribonucleoside-RNA. In terms of biological role, poly(U)-specific endoribonuclease involved in the processing of intron-encoded box C/D snoRNAs, such as U16 and U86. Releases products that have 2',3'-cyclic phosphate termini at the 3'-end. In Xenopus laevis (African clawed frog), this protein is Poly(U)-specific endoribonuclease-A (endou-a).